The following is a 449-amino-acid chain: Type 3 secretion system ATPase (449 aa).

Position 178–183 (G178–T183) interacts with ATP.

Belongs to the ATPase alpha/beta chains family. T3SS ATPase subfamily. The core secretion machinery of the T3SS is composed of approximately 20 different proteins, including cytoplasmic components, a base, an export apparatus and a needle. This subunit is part of the cytosolic complex. Forms homododecamers.

Its subcellular location is the cytoplasm. The catalysed reaction is ATP + H2O + cellular proteinSide 1 = ADP + phosphate + cellular proteinSide 2.. Its function is as follows. ATPase component of the type III secretion system (T3SS), also called injectisome, which is used to inject bacterial effector proteins into eukaryotic host cells. Acts as a molecular motor to provide the energy that is required for the export of proteins. Required for type III secretion apparatus (T3SA) formation, proper protein secretion, host cell invasion and virulence. May play a critical role in T3SS substrate recognition, disassembly of the effector/chaperone complex and unfolding of the effector in an ATP-dependent manner prior to secretion. In Pseudomonas syringae pv. syringae, this protein is Type 3 secretion system ATPase.